Here is a 179-residue protein sequence, read N- to C-terminus: Large ribosomal subunit protein uL5 (179 aa).

The protein belongs to the universal ribosomal protein uL5 family. As to quaternary structure, part of the 50S ribosomal subunit; part of the 5S rRNA/L5/L18/L25 subcomplex. Contacts the 5S rRNA and the P site tRNA. Forms a bridge to the 30S subunit in the 70S ribosome.

Functionally, this is one of the proteins that bind and probably mediate the attachment of the 5S RNA into the large ribosomal subunit, where it forms part of the central protuberance. In the 70S ribosome it contacts protein S13 of the 30S subunit (bridge B1b), connecting the 2 subunits; this bridge is implicated in subunit movement. Contacts the P site tRNA; the 5S rRNA and some of its associated proteins might help stabilize positioning of ribosome-bound tRNAs. In Bacillus pumilus (strain SAFR-032), this protein is Large ribosomal subunit protein uL5.